The following is a 126-amino-acid chain: Holo-[acyl-carrier-protein] synthase (126 aa).

Mg(2+) contacts are provided by Asp-9 and Glu-58.

Belongs to the P-Pant transferase superfamily. AcpS family. Mg(2+) is required as a cofactor.

The protein localises to the cytoplasm. The catalysed reaction is apo-[ACP] + CoA = holo-[ACP] + adenosine 3',5'-bisphosphate + H(+). Transfers the 4'-phosphopantetheine moiety from coenzyme A to a Ser of acyl-carrier-protein. The protein is Holo-[acyl-carrier-protein] synthase of Salmonella choleraesuis (strain SC-B67).